A 310-amino-acid polypeptide reads, in one-letter code: Alpha/beta hydrolase domain-containing protein 17A (310 aa).

Residues 38 to 61 (VPEPEPGPGGAGAAPSGPLRTSAA) form a disordered region. Residues Ser190, Asp255, and His284 each act as charge relay system in the active site. Ser307 is modified (phosphoserine).

Belongs to the AB hydrolase superfamily. ABHD17 family. Post-translationally, palmitoylated on cysteine residues located in a cysteine cluster at the N-terminus which promotes membrane localization. Palmitoylation is required for post-synaptic localization and for depalmitoylating activity towards DLG4/PSD95.

It is found in the cell membrane. It localises to the endosome membrane. Its subcellular location is the cell projection. The protein resides in the dendritic spine. The protein localises to the postsynaptic density membrane. The enzyme catalyses S-hexadecanoyl-L-cysteinyl-[protein] + H2O = L-cysteinyl-[protein] + hexadecanoate + H(+). Functionally, hydrolyzes fatty acids from S-acylated cysteine residues in proteins. Has depalmitoylating activity towards NRAS. Has depalmitoylating activity towards DLG4/PSD95. May have depalmitoylating activity towars MAP6. The sequence is that of Alpha/beta hydrolase domain-containing protein 17A from Mus musculus (Mouse).